We begin with the raw amino-acid sequence, 227 residues long: 2,3-bisphosphoglycerate-dependent phosphoglycerate mutase (227 aa).

Substrate-binding positions include 7 to 14, 20 to 21, arginine 59, 86 to 89, lysine 97, 113 to 114, and 182 to 183; these read RHGLSEWN, TG, ERHY, RR, and GN. Histidine 8 serves as the catalytic Tele-phosphohistidine intermediate. Glutamate 86 functions as the Proton donor/acceptor in the catalytic mechanism.

This sequence belongs to the phosphoglycerate mutase family. BPG-dependent PGAM subfamily. In terms of assembly, homodimer.

It carries out the reaction (2R)-2-phosphoglycerate = (2R)-3-phosphoglycerate. Its pathway is carbohydrate degradation; glycolysis; pyruvate from D-glyceraldehyde 3-phosphate: step 3/5. Its function is as follows. Catalyzes the interconversion of 2-phosphoglycerate and 3-phosphoglycerate. The protein is 2,3-bisphosphoglycerate-dependent phosphoglycerate mutase of Actinobacillus succinogenes (strain ATCC 55618 / DSM 22257 / CCUG 43843 / 130Z).